Here is a 509-residue protein sequence, read N- to C-terminus: Type II methyltransferase M.BsoBI (509 aa).

The protein belongs to the N(4)/N(6)-methyltransferase family. N(4) subfamily.

It carries out the reaction a 2'-deoxycytidine in DNA + S-adenosyl-L-methionine = an N(4)-methyl-2'-deoxycytidine in DNA + S-adenosyl-L-homocysteine + H(+). In terms of biological role, an alpha subtype methylase that recognizes the double-stranded sequence 5'-CYCGRG-3', methylates C-1 on both strands, and protects the DNA from cleavage by the BsoBI endonuclease. The polypeptide is Type II methyltransferase M.BsoBI (Geobacillus stearothermophilus (Bacillus stearothermophilus)).